The chain runs to 506 residues: ATP synthase subunit alpha (506 aa).

ATP is bound at residue 171-178 (GDRQTGKT).

The protein belongs to the ATPase alpha/beta chains family. F-type ATPases have 2 components, CF(1) - the catalytic core - and CF(0) - the membrane proton channel. CF(1) has five subunits: alpha(3), beta(3), gamma(1), delta(1), epsilon(1). CF(0) has four main subunits: a(1), b(1), b'(1) and c(9-12).

It is found in the cellular thylakoid membrane. It catalyses the reaction ATP + H2O + 4 H(+)(in) = ADP + phosphate + 5 H(+)(out). In terms of biological role, produces ATP from ADP in the presence of a proton gradient across the membrane. The alpha chain is a regulatory subunit. The chain is ATP synthase subunit alpha from Trichormus variabilis (strain ATCC 29413 / PCC 7937) (Anabaena variabilis).